Reading from the N-terminus, the 434-residue chain is Potassium/proton antiporter CemA (434 aa).

The next 5 helical transmembrane spans lie at 75–95 (LLEYKLSLWLIQLFLIFSLFF), 210–230 (LASLQYIGCLFFIPLGVSFFF), 311–331 (IVLHLLTDLIWFITLSCLFIL), 359–379 (ILLLTDLCIGFHSPHGWEIVI), and 395–415 (ISCFVSTFPVILDTVFKYLIF).

The protein belongs to the CemA family.

It is found in the plastid. The protein localises to the chloroplast inner membrane. It catalyses the reaction K(+)(in) + H(+)(out) = K(+)(out) + H(+)(in). Functionally, contributes to K(+)/H(+) antiport activity by supporting proton efflux to control proton extrusion and homeostasis in chloroplasts in a light-dependent manner to modulate photosynthesis. Prevents excessive induction of non-photochemical quenching (NPQ) under continuous-light conditions. Indirectly promotes efficient inorganic carbon uptake into chloroplasts. This Marchantia polymorpha (Common liverwort) protein is Potassium/proton antiporter CemA.